The primary structure comprises 120 residues: NAD(P)H-quinone oxidoreductase subunit 3, chloroplastic (120 aa).

3 consecutive transmembrane segments (helical) span residues 9-29 (IFWA…LISG), 64-84 (MFAL…PWAM), and 88-108 (VLGV…IVGS).

It belongs to the complex I subunit 3 family. As to quaternary structure, NDH is composed of at least 16 different subunits, 5 of which are encoded in the nucleus.

The protein resides in the plastid. The protein localises to the chloroplast thylakoid membrane. It catalyses the reaction a plastoquinone + NADH + (n+1) H(+)(in) = a plastoquinol + NAD(+) + n H(+)(out). It carries out the reaction a plastoquinone + NADPH + (n+1) H(+)(in) = a plastoquinol + NADP(+) + n H(+)(out). Functionally, NDH shuttles electrons from NAD(P)H:plastoquinone, via FMN and iron-sulfur (Fe-S) centers, to quinones in the photosynthetic chain and possibly in a chloroplast respiratory chain. The immediate electron acceptor for the enzyme in this species is believed to be plastoquinone. Couples the redox reaction to proton translocation, and thus conserves the redox energy in a proton gradient. This is NAD(P)H-quinone oxidoreductase subunit 3, chloroplastic from Gossypium hirsutum (Upland cotton).